A 444-amino-acid chain; its full sequence is uncharacterized protein (444 aa).

The next 12 membrane-spanning stretches (helical) occupy residues Pro-2 to Leu-22, Thr-24 to Asn-44, Thr-52 to Gly-72, Phe-106 to Tyr-126, Met-134 to Leu-154, Val-174 to Asn-194, Phe-228 to Phe-248, Ile-261 to Tyr-281, Ile-305 to Gly-325, Leu-343 to Ala-363, Ala-377 to Cys-397, and Leu-424 to Met-444.

The protein belongs to the GntP permease family.

The protein resides in the cell membrane. This is an uncharacterized protein from Bacillus subtilis (strain 168).